The following is a 77-amino-acid chain: Acyl carrier protein (77 aa).

Residues Ser2–Ser77 form the Carrier domain. O-(pantetheine 4'-phosphoryl)serine is present on Ser37.

This sequence belongs to the acyl carrier protein (ACP) family. In terms of processing, 4'-phosphopantetheine is transferred from CoA to a specific serine of apo-ACP by AcpS. This modification is essential for activity because fatty acids are bound in thioester linkage to the sulfhydryl of the prosthetic group.

Its subcellular location is the cytoplasm. The protein operates within lipid metabolism; fatty acid biosynthesis. Functionally, carrier of the growing fatty acid chain in fatty acid biosynthesis. The chain is Acyl carrier protein from Roseobacter denitrificans (strain ATCC 33942 / OCh 114) (Erythrobacter sp. (strain OCh 114)).